The primary structure comprises 338 residues: Rho GTPase-activating protein gacA (338 aa).

The Rho-GAP domain maps to 149 to 327 (NTLEHVEDEG…NVLSHKVAVH (179 aa)).

It localises to the cytoplasm. Rho GTPase-activating protein involved in the signal transduction pathway. This Dictyostelium discoideum (Social amoeba) protein is Rho GTPase-activating protein gacA (gacA).